The following is a 567-amino-acid chain: Myo-inositol transporter 1 (567 aa).

Residues 1 to 88 are Cytoplasmic-facing; it reads MSARPAQPNI…KFVWMLVSAA (88 aa). The tract at residues 14 to 42 is disordered; it reads IRTSLSGYPSPTHSGSSTPASLEFSDGRL. Positions 16-33 are enriched in polar residues; it reads TSLSGYPSPTHSGSSTPA. A helical membrane pass occupies residues 89-109; sequence AISGLLFGYDTAAISGMLVII. At 110-123 the chain is on the extracellular side; sequence KDDLGTILSSWQKE. The helical transmembrane segment at 124–144 threads the bilayer; that stretch reads VITSATTLGALLGGLAAGCVS. The Cytoplasmic portion of the chain corresponds to 145-150; that stretch reads DFTGRR. Residues 151-171 form a helical membrane-spanning segment; that stretch reads LVIVFANVAFIGGSICQAACH. Residues 172–180 are Extracellular-facing; the sequence is TVAAMIAGR. The chain crosses the membrane as a helical span at residues 181–201; it reads FIVGLGVGLASCIVPLYIGEL. Residues 202 to 209 lie on the Cytoplasmic side of the membrane; the sequence is APTMIRGR. Residues 210 to 230 traverse the membrane as a helical segment; it reads LVTINCVAVTLGQVVAYAIGA. At 231 to 240 the chain is on the extracellular side; sequence SFQNVHNGWR. A helical membrane pass occupies residues 241–261; it reads WIVGLGAMPSFVQLAAIGFLP. The Cytoplasmic portion of the chain corresponds to 262–343; that stretch reads ESPRILLLRS…IGCGLQAAQQ (82 aa). A helical membrane pass occupies residues 344–364; sequence LCGFNTLMYYSATIFAMLGFN. Residue Asn365 is glycosylated (N-linked (GlcNAc...) asparagine). Residues 365–367 are Extracellular-facing; that stretch reads NAT. A helical transmembrane segment spans residues 368-388; the sequence is AVGLIVATVNVLFTLVALKIV. The Cytoplasmic segment spans residues 389–397; it reads DPVGRRRTM. Residues 398 to 418 form a helical membrane-spanning segment; it reads LFTLPIMILALVFAAIFFYYL. Residues 419–435 are Extracellular-facing; that stretch reads TLSTNGILIEDHDYPRS. A helical transmembrane segment spans residues 436–456; sequence LSILVLLSMLLYVAGYATGLG. The Cytoplasmic segment spans residues 457–476; the sequence is NIPWQQGELFRLEVRGIGTS. Residues 477–497 form a helical membrane-spanning segment; that stretch reads ICTAVNWSCNMLIAGTFLSLM. The Extracellular portion of the chain corresponds to 498 to 503; it reads DAATPS. A helical membrane pass occupies residues 504-524; sequence GAFGIYAGFCVIGWVFCWMLY. Over 525–567 the chain is Cytoplasmic; it reads PETSGLSLEEVYFVFEEGFGIKKSQQLRKQKLVEAAKLKAIFE.

This sequence belongs to the major facilitator superfamily. Sugar transporter (TC 2.A.1.1) family.

The protein localises to the cell membrane. It catalyses the reaction myo-inositol(out) + H(+)(out) = myo-inositol(in) + H(+)(in). In terms of biological role, may function as a transporter or as a sensor for myo-inositol. This Cryptococcus neoformans var. grubii serotype A (strain H99 / ATCC 208821 / CBS 10515 / FGSC 9487) (Filobasidiella neoformans var. grubii) protein is Myo-inositol transporter 1.